A 360-amino-acid chain; its full sequence is DNA replication and repair protein RecF (360 aa).

Position 30–37 (30–37 (GHNGSGKT)) interacts with ATP.

The protein belongs to the RecF family.

The protein resides in the cytoplasm. Functionally, the RecF protein is involved in DNA metabolism; it is required for DNA replication and normal SOS inducibility. RecF binds preferentially to single-stranded, linear DNA. It also seems to bind ATP. The polypeptide is DNA replication and repair protein RecF (Actinobacillus pleuropneumoniae serotype 5b (strain L20)).